The chain runs to 288 residues: Urease accessory protein UreD 1 (288 aa).

A compositionally biased stretch (pro residues) spans 1 to 10; sequence MHGPLAPAPS. Residues 1-35 form a disordered region; sequence MHGPLAPAPSPERLGAAPARQRSDGRIRLRVGPAR.

It belongs to the UreD family. As to quaternary structure, ureD, UreF and UreG form a complex that acts as a GTP-hydrolysis-dependent molecular chaperone, activating the urease apoprotein by helping to assemble the nickel containing metallocenter of UreC. The UreE protein probably delivers the nickel.

It localises to the cytoplasm. Required for maturation of urease via the functional incorporation of the urease nickel metallocenter. This is Urease accessory protein UreD 1 from Methylobacterium radiotolerans (strain ATCC 27329 / DSM 1819 / JCM 2831 / NBRC 15690 / NCIMB 10815 / 0-1).